A 271-amino-acid chain; its full sequence is Structure-specific endonuclease subunit slx1 (271 aa).

The 83-residue stretch at 5 to 87 folds into the GIY-YIG domain; that stretch reads NFYCCYLLKS…QNLGISRYTK (83 aa). The SLX1-type zinc-finger motif lies at 180–231; sequence CNLCYECIESDELRANCPFTDCNSINHLTCLASSFLTEECQVLPIEGMCTKC.

The protein belongs to the SLX1 family. In terms of assembly, forms a heterodimer with slx4. Mg(2+) is required as a cofactor. The cofactor is Mn(2+).

It localises to the nucleus. It is found in the nucleolus. Catalytic subunit of the slx1-slx4 structure-specific endonuclease that resolves DNA secondary structures generated during DNA repair and recombination. Has endonuclease activity towards branched DNA substrates, introducing single-strand cuts in duplex DNA close to junctions with ss-DNA. Has a preference for stem-loop (SL) and splayed arm Y structures. Introduces a single-strand cut in duplex DNA on the 3' side of a double-strand/single-strand junction with respect to the single-strand moving 3' to 5' away from the junction. Plays a critical role in maintaining the integrity of the ribosomal DNA (rDNA) loci, where it has a role in re-starting stalled replication forks. The complex initiates homologous recombination (HR) events, used to maintain rDNA copy number, in the rDNA repeats that are processed by a mechanism that requires rad22, but not rhp51. It is also required for suppression of methyl methanesulfonate (MMS) and UV-C irradiation hypersensitivity of the structural maintenance of chromosome (SMC) protein mutant, smc6-74, by overexpression of brc1. Has Holliday junction resolvase activity in vitro. In Schizosaccharomyces pombe (strain 972 / ATCC 24843) (Fission yeast), this protein is Structure-specific endonuclease subunit slx1.